Reading from the N-terminus, the 425-residue chain is Protein CLP1 homolog (425 aa).

Residues glutamate 18, lysine 59, and 121–126 (DVGKST) contribute to the ATP site.

This sequence belongs to the Clp1 family. Clp1 subfamily.

It localises to the nucleus. Its function is as follows. Required for endonucleolytic cleavage during polyadenylation-dependent pre-mRNA 3'-end formation. This Drosophila ananassae (Fruit fly) protein is Protein CLP1 homolog (cbc).